We begin with the raw amino-acid sequence, 239 residues long: MSKFVPENVQKKLARDEKLRKAKAEQRKASSAQMKQRKAEWISKAQKYAAEYEAAEKKIVDEKRKARKTGAFYVPAEAKVAFAIRIRGVNQLHPDVKRVLRLFRLRQLHNGAFFRVNKASLNMIKRVLPFITFGYPTRNTISKLIYKRGFAKVNGQRIPLTDNTIVEKSLGKFGITCVEDLIHEITTVGPHFKEANNFLWPFKLDTPRGGFRNKRHAYHQGGDWGNREVYINDLVKAML.

The interval 1–37 (MSKFVPENVQKKLARDEKLRKAKAEQRKASSAQMKQR) is disordered. Basic and acidic residues predominate over residues 9 to 28 (VQKKLARDEKLRKAKAEQRK).

Belongs to the universal ribosomal protein uL30 family.

This Tetrahymena thermophila protein is Large ribosomal subunit protein uL30 (RPL7).